Here is a 326-residue protein sequence, read N- to C-terminus: tRNA(Ile)-lysidine synthase (326 aa).

23–28 (SGGVDS) is a binding site for ATP.

It belongs to the tRNA(Ile)-lysidine synthase family.

The protein resides in the cytoplasm. It catalyses the reaction cytidine(34) in tRNA(Ile2) + L-lysine + ATP = lysidine(34) in tRNA(Ile2) + AMP + diphosphate + H(+). In terms of biological role, ligates lysine onto the cytidine present at position 34 of the AUA codon-specific tRNA(Ile) that contains the anticodon CAU, in an ATP-dependent manner. Cytidine is converted to lysidine, thus changing the amino acid specificity of the tRNA from methionine to isoleucine. The sequence is that of tRNA(Ile)-lysidine synthase from Wolinella succinogenes (strain ATCC 29543 / DSM 1740 / CCUG 13145 / JCM 31913 / LMG 7466 / NCTC 11488 / FDC 602W) (Vibrio succinogenes).